The primary structure comprises 173 residues: MTYFVLFLGLCFVLGGLAVASNPSPYYGVVGLVVASVAGCGWLLSLGVSFVSLVLFMVYLGGMLVVFVYSVSLAADPFPEAWGDWRVVGYGAGFVLVLVVGGVVGGLVEFWHPGVITVDSGGMFSVRLDFSGVAMFYSCGVGMFLVAGWGLLLTLFVVLELVRGLSRGAIRAV.

5 helical membrane-spanning segments follow: residues Met-1–Ser-21, Tyr-27–Gly-47, Val-48–Val-68, Val-87–Leu-107, and Cys-139–Leu-159.

This sequence belongs to the complex I subunit 6 family.

The protein resides in the mitochondrion membrane. The catalysed reaction is a ubiquinone + NADH + 5 H(+)(in) = a ubiquinol + NAD(+) + 4 H(+)(out). In terms of biological role, core subunit of the mitochondrial membrane respiratory chain NADH dehydrogenase (Complex I) that is believed to belong to the minimal assembly required for catalysis. Complex I functions in the transfer of electrons from NADH to the respiratory chain. The immediate electron acceptor for the enzyme is believed to be ubiquinone. This is NADH-ubiquinone oxidoreductase chain 6 (MT-ND6) from Larus canus (Common gull).